We begin with the raw amino-acid sequence, 157 residues long: Protein MGF 110-13L (157 aa).

2 helical membrane-spanning segments follow: residues 14–34 and 39–59; these read QYCLYFIIGIAYTDCFICALC and LSTTMKLFVLLSILVWLAQPV.

This sequence belongs to the asfivirus MGF 110 family.

It is found in the host membrane. Its function is as follows. Plays a role in virus cell tropism, and may be required for efficient virus replication in macrophages. In African swine fever virus (isolate Tick/Malawi/Lil 20-1/1983) (ASFV), this protein is Protein MGF 110-13L.